We begin with the raw amino-acid sequence, 242 residues long: ATP-dependent dethiobiotin synthetase BioD (242 aa).

12–17 (EVGKTV) lines the ATP pocket. Thr16 lines the Mg(2+) pocket. Lys37 is a catalytic residue. Residue Ser41 coordinates substrate. ATP contacts are provided by residues Asp51 and 112-115 (EGAG). Mg(2+)-binding residues include Asp51 and Glu112.

Belongs to the dethiobiotin synthetase family. Homodimer. Mg(2+) is required as a cofactor.

It is found in the cytoplasm. The enzyme catalyses (7R,8S)-7,8-diammoniononanoate + CO2 + ATP = (4R,5S)-dethiobiotin + ADP + phosphate + 3 H(+). Its pathway is cofactor biosynthesis; biotin biosynthesis; biotin from 7,8-diaminononanoate: step 1/2. Its function is as follows. Catalyzes a mechanistically unusual reaction, the ATP-dependent insertion of CO2 between the N7 and N8 nitrogen atoms of 7,8-diaminopelargonic acid (DAPA, also called 7,8-diammoniononanoate) to form a ureido ring. This Bacillus anthracis (strain A0248) protein is ATP-dependent dethiobiotin synthetase BioD.